We begin with the raw amino-acid sequence, 249 residues long: 3-deoxy-D-manno-octulosonic acid kinase (249 aa).

Residue Asp-175 is part of the active site.

This sequence belongs to the protein kinase superfamily. KdkA/RfaP family.

Its subcellular location is the cell inner membrane. It catalyses the reaction an alpha-Kdo-(2-&gt;6)-lipid IVA + ATP = a 4-O-phospho-alpha-Kdo-(2-&gt;6)-lipid IVA + ADP + H(+). Its pathway is bacterial outer membrane biogenesis; LPS core biosynthesis. Its function is as follows. Catalyzes the ATP-dependent phosphorylation of the 3-deoxy-D-manno-octulosonic acid (Kdo) residue in Kdo-lipid IV(A) at the 4-OH position. The chain is 3-deoxy-D-manno-octulosonic acid kinase from Xylella fastidiosa (strain M12).